The chain runs to 219 residues: Elongation factor Ts (219 aa).

The segment at T82–V85 is involved in Mg(2+) ion dislocation from EF-Tu.

The protein belongs to the EF-Ts family.

Its subcellular location is the cytoplasm. Associates with the EF-Tu.GDP complex and induces the exchange of GDP to GTP. It remains bound to the aminoacyl-tRNA.EF-Tu.GTP complex up to the GTP hydrolysis stage on the ribosome. In Anaeromyxobacter sp. (strain Fw109-5), this protein is Elongation factor Ts.